The following is a 493-amino-acid chain: Transmembrane and coiled-coil domain-containing protein 6 (493 aa).

Residues 15–84 (GVEELRRRRR…QRGTEEKERE (70 aa)) adopt a coiled-coil conformation. 2 consecutive transmembrane segments (helical) span residues 338–358 (VVAA…SLLP) and 386–406 (PLLQ…TVLC).

It is found in the membrane. This is Transmembrane and coiled-coil domain-containing protein 6 (TMCO6) from Homo sapiens (Human).